Reading from the N-terminus, the 377-residue chain is DNA primase small subunit PriS (377 aa).

Residues aspartate 99, aspartate 101, and aspartate 274 contribute to the active site.

It belongs to the eukaryotic-type primase small subunit family. Heterodimer of a small subunit (PriS) and a large subunit (PriL). Mg(2+) serves as cofactor. The cofactor is Mn(2+).

Its function is as follows. Catalytic subunit of DNA primase, an RNA polymerase that catalyzes the synthesis of short RNA molecules used as primers for DNA polymerase during DNA replication. The small subunit contains the primase catalytic core and has DNA synthesis activity on its own. Binding to the large subunit stabilizes and modulates the activity, increasing the rate of DNA synthesis while decreasing the length of the DNA fragments, and conferring RNA synthesis capability. The DNA polymerase activity may enable DNA primase to also catalyze primer extension after primer synthesis. May also play a role in DNA repair. The polypeptide is DNA primase small subunit PriS (Staphylothermus marinus (strain ATCC 43588 / DSM 3639 / JCM 9404 / F1)).